Reading from the N-terminus, the 590-residue chain is UvrABC system protein C (590 aa).

The GIY-YIG domain maps to 15–98; that stretch reads AEPGVYQFVA…VKRHQPRYNV (84 aa). Residues 207 to 242 enclose the UVR domain; it reads GALADPLRREMAAAAQAEAFERAANLRDRLAVVEGF.

Belongs to the UvrC family. In terms of assembly, interacts with UvrB in an incision complex.

The protein localises to the cytoplasm. In terms of biological role, the UvrABC repair system catalyzes the recognition and processing of DNA lesions. UvrC both incises the 5' and 3' sides of the lesion. The N-terminal half is responsible for the 3' incision and the C-terminal half is responsible for the 5' incision. The sequence is that of UvrABC system protein C from Halobacterium salinarum (strain ATCC 29341 / DSM 671 / R1).